Reading from the N-terminus, the 125-residue chain is Mite group 2 allergen Gly d 2.02 (125 aa).

This sequence belongs to the NPC2 family.

Its subcellular location is the secreted. The sequence is that of Mite group 2 allergen Gly d 2.02 from Glycyphagus domesticus (House itch mite).